The chain runs to 80 residues: Photosystem II extrinsic protein V (80 aa).

Methionine 47 contacts heme.

Belongs to the cytochrome c family. PsbV subfamily. In terms of assembly, PSII is composed of 1 copy each of membrane proteins PsbA, PsbB, PsbC, PsbD, PsbE, PsbF, PsbH, PsbI, PsbJ, PsbK, PsbL, PsbM, PsbT, PsbY, PsbZ, Psb30/Ycf12, at least 3 peripheral proteins of the oxygen-evolving complex and a large number of cofactors. It forms dimeric complexes. It depends on heme as a cofactor.

It localises to the plastid. It is found in the chloroplast thylakoid membrane. Its function is as follows. One of the extrinsic, lumenal subunits of photosystem II (PSII). PSII is a light-driven water plastoquinone oxidoreductase, using light energy to abstract electrons from H(2)O, generating a proton gradient subsequently used for ATP formation. The extrinsic proteins stabilize the structure of photosystem II oxygen-evolving complex (OEC), the ion environment of oxygen evolution and protect the OEC against heat-induced inactivation. This Thalassiosira weissflogii (Marine diatom) protein is Photosystem II extrinsic protein V.